The chain runs to 372 residues: Cyclin-dependent kinase 9 (372 aa).

One can recognise a Protein kinase domain in the interval Y19–F315. ATP-binding positions include I25–V33 and K48. Catalysis depends on D149, which acts as the Proton acceptor. The segment at P341–F372 is disordered. Residues Q352 to T366 show a composition bias toward polar residues.

This sequence belongs to the protein kinase superfamily. CMGC Ser/Thr protein kinase family. CDC2/CDKX subfamily. Associates with cyclin-T to form P-TEFb. Also associates with cyclin-K.

The protein localises to the nucleus. It carries out the reaction L-seryl-[protein] + ATP = O-phospho-L-seryl-[protein] + ADP + H(+). It catalyses the reaction L-threonyl-[protein] + ATP = O-phospho-L-threonyl-[protein] + ADP + H(+). The catalysed reaction is [DNA-directed RNA polymerase] + ATP = phospho-[DNA-directed RNA polymerase] + ADP + H(+). Its function is as follows. Member of the cyclin-dependent kinase pair (CDK9/cyclin-T) complex, also called positive transcription elongation factor b (P-TEFb), which facilitates the transition from abortive to production elongation by phosphorylating the CTD (C-terminal domain) of the large subunit of RNA polymerase II (RNAP II), SUPT5H and RDBP. The CDK9/cyclin-K complex also has a kinase activity toward CTD of RNAP II and can substitute for P-TEFb in vitro. The protein is Cyclin-dependent kinase 9 (CDK9) of Gallus gallus (Chicken).